Consider the following 145-residue polypeptide: Deoxyuridine 5'-triphosphate nucleotidohydrolase (145 aa).

Substrate contacts are provided by residues 64-66 (RSG), asparagine 77, 81-83 (TID), and methionine 91.

Belongs to the dUTPase family. The cofactor is Mg(2+).

It carries out the reaction dUTP + H2O = dUMP + diphosphate + H(+). Its pathway is pyrimidine metabolism; dUMP biosynthesis; dUMP from dCTP (dUTP route): step 2/2. This enzyme is involved in nucleotide metabolism: it produces dUMP, the immediate precursor of thymidine nucleotides and it decreases the intracellular concentration of dUTP so that uracil cannot be incorporated into DNA. This is Deoxyuridine 5'-triphosphate nucleotidohydrolase from Leptospira borgpetersenii serovar Hardjo-bovis (strain JB197).